Reading from the N-terminus, the 119-residue chain is MIKLNFSRELRLLTPLHFKYVFEQPFRASTPELTILARPNNLAHPRLGLTVAKKHLKKAHDRNRIKRLCRESFRLAQYKLPNCDFVIVAKQGIGKLDNRTLTQTLDKLWQRHIRLAQKS.

The protein belongs to the RnpA family. In terms of assembly, consists of a catalytic RNA component (M1 or rnpB) and a protein subunit.

The enzyme catalyses Endonucleolytic cleavage of RNA, removing 5'-extranucleotides from tRNA precursor.. In terms of biological role, RNaseP catalyzes the removal of the 5'-leader sequence from pre-tRNA to produce the mature 5'-terminus. It can also cleave other RNA substrates such as 4.5S RNA. The protein component plays an auxiliary but essential role in vivo by binding to the 5'-leader sequence and broadening the substrate specificity of the ribozyme. This chain is Ribonuclease P protein component, found in Pasteurella multocida (strain Pm70).